We begin with the raw amino-acid sequence, 493 residues long: Leucine-rich repeat-containing protein 14 (493 aa).

One copy of the LRR 1; degenerate repeat lies at 111–146; that stretch reads KHTLRVLDMTGLLDDGVEQDPGTMSMWDCTAAVART. The stretch at 194-218 is one LRR 2; degenerate repeat; that stretch reads RLCCRDLRAEDLPMRNTVALLQLLD. The LRR 3; degenerate repeat unit spans residues 219 to 246; the sequence is AGCLRRIDLRFNNLGLRGLSVIIPHVAR. An LRR 4; degenerate repeat occupies 247-282; it reads FQHLASLRLHYVHGDSRQPSVDGEDNFRYFLAQMGR. LRR repeat units follow at residues 283–307, 308–339, 340–360, 364–391, and 392–416; these read FICL…LSTL, QRPL…AHLK, KLDL…QGLL, AATL…TLTR, and CASL…LLRD.

Belongs to the PRAME family. LRRC14 subfamily. As to quaternary structure, interacts with IKBKB; disrupts IKBKB-IKBKG interaction preventing I-kappa-B-kinase (IKK) core complex formation and leading to a decrease of IKBKB phosphorylation and NF-kappaB activation. Interacts with CHUK.

Its subcellular location is the cytoplasm. Its function is as follows. Negatively regulates Toll-like receptor-mediated NF-kappa-B signaling by disrupting IKK core complex formation through interaction with IKBKB. This Rattus norvegicus (Rat) protein is Leucine-rich repeat-containing protein 14.